The primary structure comprises 199 residues: dCTP deaminase, dUMP-forming (199 aa).

DCTP-binding positions include Lys-101 to Arg-106, Asp-119, Thr-127 to Glu-129, Gln-148, Tyr-162, and Gln-174. Glu-129 acts as the Proton donor/acceptor in catalysis. The disordered stretch occupies residues Gly-163 to Arg-199. The span at Tyr-171–Tyr-183 shows a compositional bias: polar residues.

Belongs to the dCTP deaminase family. As to quaternary structure, homotrimer.

It catalyses the reaction dCTP + 2 H2O = dUMP + NH4(+) + diphosphate. The protein operates within pyrimidine metabolism; dUMP biosynthesis; dUMP from dCTP: step 1/1. Functionally, bifunctional enzyme that catalyzes both the deamination of dCTP to dUTP and the hydrolysis of dUTP to dUMP without releasing the toxic dUTP intermediate. This is dCTP deaminase, dUMP-forming from Nocardia farcinica (strain IFM 10152).